The primary structure comprises 157 residues: Endoribonuclease YbeY (157 aa).

Zn(2+) contacts are provided by H116, H120, and H126.

This sequence belongs to the endoribonuclease YbeY family. Zn(2+) is required as a cofactor.

The protein localises to the cytoplasm. Functionally, single strand-specific metallo-endoribonuclease involved in late-stage 70S ribosome quality control and in maturation of the 3' terminus of the 16S rRNA. This Arthrobacter sp. (strain FB24) protein is Endoribonuclease YbeY.